A 946-amino-acid polypeptide reads, in one-letter code: Translation initiation factor IF-2 (946 aa).

2 disordered regions span residues 58–250 (AERK…AVVI) and 301–324 (VSRD…KSLS). 2 stretches are compositionally biased toward low complexity: residues 102–165 (EPPQ…QPAA) and 174–185 (AQPSAPQPAAAQ). Residues 186-211 (PRPPQPPMPSRPPPAGYRPAPPPGAR) are compositionally biased toward pro residues. The segment covering 212-229 (PPMSAAPGAPAQPGAAAQ) has biased composition (low complexity). The 170-residue stretch at 445–614 (IRPPVVTVMG…ALQSEVLELK (170 aa)) folds into the tr-type G domain. The segment at 454–461 (GHVDHGKT) is G1. 454–461 (GHVDHGKT) is a binding site for GTP. Residues 479 to 483 (GITQH) are G2. The interval 500–503 (DTPG) is G3. GTP is bound by residues 500 to 504 (DTPGH) and 554 to 557 (NKVD). The interval 554–557 (NKVD) is G4. Residues 590-592 (SAR) form a G5 region.

The protein belongs to the TRAFAC class translation factor GTPase superfamily. Classic translation factor GTPase family. IF-2 subfamily.

It localises to the cytoplasm. Functionally, one of the essential components for the initiation of protein synthesis. Protects formylmethionyl-tRNA from spontaneous hydrolysis and promotes its binding to the 30S ribosomal subunits. Also involved in the hydrolysis of GTP during the formation of the 70S ribosomal complex. This chain is Translation initiation factor IF-2, found in Anaeromyxobacter sp. (strain K).